A 319-amino-acid chain; its full sequence is Transcription factor STKL2 (319 aa).

The tract at residues 1 to 119 (MAPLESPATA…NKKANPQRVW (119 aa)) is disordered. Positions 21–34 (EIFKSSSEESKPKD) are enriched in basic and acidic residues. The span at 38–55 (VPSSKTLKSPSAAVNSKT) shows a compositional bias: polar residues. Positions 89–112 (RAGEGSTSRDMHVKRVKKEDDNKK) are enriched in basic and acidic residues.

This sequence belongs to the GeBP family. Expressed strongly in leaves and flowers, weakly in roots, and very weakly in stems.

Its subcellular location is the nucleus. Its function is as follows. Transcription repressor that binds DNA in a sequence-specific manner, 5'-GCCT-3', to regulate the expression of PGR. Acts as a modulatory component for the glucose-triggered developmental leaf growth process. This is Transcription factor STKL2 from Arabidopsis thaliana (Mouse-ear cress).